The primary structure comprises 158 residues: C-type lectin TsL (158 aa).

Residues 1–23 form the signal peptide; that stretch reads MGRFIFVSFGLLVVFLSLSGAKG. In terms of domain architecture, C-type lectin spans 24 to 158; it reads SCCTNDSLPM…KNSFLCQCKF (135 aa). Intrachain disulfides connect C26–C37, C54–C154, C61–C156, and C129–C146. Residue N28 is glycosylated (N-linked (GlcNAc...) (high mannose) asparagine). Ca(2+)-binding residues include Q119, D121, E127, N142, and D143. The Galactose-binding motif lies at 119 to 121; sequence QPD.

Belongs to the true venom lectin family. As to quaternary structure, homodimer; disulfide-linked. As to expression, expressed by the venom gland.

The protein resides in the secreted. In terms of biological role, galactose-binding protein which recognizes specific carbohydrate structures and agglutinates a variety of animal cells by binding to cell-surface glycoproteins and glycolipids. May be a calcium-dependent lectin. This Trimeresurus stejnegeri (Chinese green tree viper) protein is C-type lectin TsL.